We begin with the raw amino-acid sequence, 367 residues long: Protein-glutamate methylesterase/protein-glutamine glutaminase 2 (367 aa).

In terms of domain architecture, Response regulatory spans 15–132; sequence RALIVDDSAL…SQSMHEMAEE (118 aa). 4-aspartylphosphate is present on Asp66. The CheB-type methylesterase domain occupies 172–367; it reads KTSVRNVLAI…MADEIVKIVR (196 aa). Residues Ser184, His211, and Asp311 contribute to the active site.

The protein belongs to the CheB family. In terms of processing, phosphorylated by CheA. Phosphorylation of the N-terminal regulatory domain activates the methylesterase activity.

The protein localises to the cytoplasm. The catalysed reaction is [protein]-L-glutamate 5-O-methyl ester + H2O = L-glutamyl-[protein] + methanol + H(+). It carries out the reaction L-glutaminyl-[protein] + H2O = L-glutamyl-[protein] + NH4(+). Functionally, involved in chemotaxis. Part of a chemotaxis signal transduction system that modulates chemotaxis in response to various stimuli. Catalyzes the demethylation of specific methylglutamate residues introduced into the chemoreceptors (methyl-accepting chemotaxis proteins or MCP) by CheR. Also mediates the irreversible deamidation of specific glutamine residues to glutamic acid. This Methanosarcina mazei (strain ATCC BAA-159 / DSM 3647 / Goe1 / Go1 / JCM 11833 / OCM 88) (Methanosarcina frisia) protein is Protein-glutamate methylesterase/protein-glutamine glutaminase 2.